We begin with the raw amino-acid sequence, 509 residues long: tRNA-2-methylthio-N(6)-dimethylallyladenosine synthase (509 aa).

Residues 1–21 (MNEKQKLESGQVHPSDKKSEK) form a disordered region. The 119-residue stretch at 66–184 (RKFYIRTYGC…LPELLSEAYL (119 aa)) folds into the MTTase N-terminal domain. The [4Fe-4S] cluster site is built by cysteine 75, cysteine 111, cysteine 145, cysteine 221, cysteine 225, and cysteine 228. The Radical SAM core domain occupies 207 to 437 (RNGKIKGWVN…NALVNEISAK (231 aa)). A TRAM domain is found at 440-503 (KEYEGKVVEV…TWSLDGEMVG (64 aa)).

Belongs to the methylthiotransferase family. MiaB subfamily. Monomer. It depends on [4Fe-4S] cluster as a cofactor.

The protein localises to the cytoplasm. The enzyme catalyses N(6)-dimethylallyladenosine(37) in tRNA + (sulfur carrier)-SH + AH2 + 2 S-adenosyl-L-methionine = 2-methylsulfanyl-N(6)-dimethylallyladenosine(37) in tRNA + (sulfur carrier)-H + 5'-deoxyadenosine + L-methionine + A + S-adenosyl-L-homocysteine + 2 H(+). It catalyses the reaction N(6)-dimethylallyladenosine(37) in tRNA + (sulfur carrier)-SH + AH2 + S-adenosyl-L-methionine = 2-thio-N(6)-dimethylallyladenosine(37) in tRNA + (sulfur carrier)-H + 5'-deoxyadenosine + L-methionine + A + H(+). It carries out the reaction 2-thio-N(6)-dimethylallyladenosine(37) in tRNA + S-adenosyl-L-methionine = 2-methylsulfanyl-N(6)-dimethylallyladenosine(37) in tRNA + S-adenosyl-L-homocysteine + H(+). Functionally, catalyzes the methylthiolation of N6-(dimethylallyl)adenosine (i(6)A), leading to the formation of 2-methylthio-N6-(dimethylallyl)adenosine (ms(2)i(6)A) at position 37 in tRNAs that read codons beginning with uridine. The polypeptide is tRNA-2-methylthio-N(6)-dimethylallyladenosine synthase (Bacillus subtilis (strain 168)).